A 280-amino-acid chain; its full sequence is 2-dehydro-3-deoxyphosphooctonate aldolase (280 aa).

It belongs to the KdsA family.

It is found in the cytoplasm. It carries out the reaction D-arabinose 5-phosphate + phosphoenolpyruvate + H2O = 3-deoxy-alpha-D-manno-2-octulosonate-8-phosphate + phosphate. It functions in the pathway carbohydrate biosynthesis; 3-deoxy-D-manno-octulosonate biosynthesis; 3-deoxy-D-manno-octulosonate from D-ribulose 5-phosphate: step 2/3. It participates in bacterial outer membrane biogenesis; lipopolysaccharide biosynthesis. This is 2-dehydro-3-deoxyphosphooctonate aldolase from Coxiella burnetii (strain Dugway 5J108-111).